The primary structure comprises 205 residues: Glycerol-3-phosphate acyltransferase (205 aa).

5 helical membrane passes run 6-26 (STVL…AVVV), 55-75 (KAAI…VWLV), 89-109 (VALV…FRFV), 120-140 (ILLA…LVIA), and 162-182 (ALMF…VLLI).

The protein belongs to the PlsY family. In terms of assembly, probably interacts with PlsX.

It is found in the cell inner membrane. The enzyme catalyses an acyl phosphate + sn-glycerol 3-phosphate = a 1-acyl-sn-glycero-3-phosphate + phosphate. The protein operates within lipid metabolism; phospholipid metabolism. In terms of biological role, catalyzes the transfer of an acyl group from acyl-phosphate (acyl-PO(4)) to glycerol-3-phosphate (G3P) to form lysophosphatidic acid (LPA). This enzyme utilizes acyl-phosphate as fatty acyl donor, but not acyl-CoA or acyl-ACP. The protein is Glycerol-3-phosphate acyltransferase of Herminiimonas arsenicoxydans.